The following is a 157-amino-acid chain: Transcriptional repressor NrdR (157 aa).

A zinc finger spans residues 3–34 (CSNCQNKNTKVLDSRPIEEGRAIRRRRECERC). One can recognise an ATP-cone domain in the interval 49 to 139 (LIVVKKDGVR…VYRQFKDITV (91 aa)).

It belongs to the NrdR family. It depends on Zn(2+) as a cofactor.

Negatively regulates transcription of bacterial ribonucleotide reductase nrd genes and operons by binding to NrdR-boxes. This chain is Transcriptional repressor NrdR, found in Oceanobacillus iheyensis (strain DSM 14371 / CIP 107618 / JCM 11309 / KCTC 3954 / HTE831).